The sequence spans 120 residues: Non-specific lipid-transfer protein (120 aa).

The N-terminal stretch at 1-26 (MASSMSLKLACVVVLCMVVGAPLAQG) is a signal peptide. Cystine bridges form between Cys-40-Cys-56, Cys-57-Cys-102, and Cys-77-Cys-116.

This sequence belongs to the plant LTP family.

Functionally, plant non-specific lipid-transfer proteins transfer phospholipids as well as galactolipids across membranes. May play a role in wax or cutin deposition in the cell walls of expanding epidermal cells and certain secretory tissues. In Gossypium hirsutum (Upland cotton), this protein is Non-specific lipid-transfer protein.